A 294-amino-acid polypeptide reads, in one-letter code: Tryptophan 2,3-dioxygenase 1 (294 aa).

The tract at residues 1-20 (MSEPIQPTRPAASGCPMHGA) is disordered. Residues 63–67 (FIVQH), Tyr125, and Arg129 contribute to the substrate site. His252 serves as a coordination point for heme. Substrate is bound at residue Thr266.

The protein belongs to the tryptophan 2,3-dioxygenase family. As to quaternary structure, homotetramer. The cofactor is heme.

It carries out the reaction L-tryptophan + O2 = N-formyl-L-kynurenine. Its pathway is amino-acid degradation; L-tryptophan degradation via kynurenine pathway; L-kynurenine from L-tryptophan: step 1/2. In terms of biological role, heme-dependent dioxygenase that catalyzes the oxidative cleavage of the L-tryptophan (L-Trp) pyrrole ring and converts L-tryptophan to N-formyl-L-kynurenine. Catalyzes the oxidative cleavage of the indole moiety. This chain is Tryptophan 2,3-dioxygenase 1, found in Ralstonia nicotianae (strain ATCC BAA-1114 / GMI1000) (Ralstonia solanacearum).